Consider the following 202-residue polypeptide: 3-isopropylmalate dehydratase small subunit (202 aa).

It belongs to the LeuD family. LeuD type 1 subfamily. In terms of assembly, heterodimer of LeuC and LeuD.

The catalysed reaction is (2R,3S)-3-isopropylmalate = (2S)-2-isopropylmalate. The protein operates within amino-acid biosynthesis; L-leucine biosynthesis; L-leucine from 3-methyl-2-oxobutanoate: step 2/4. Functionally, catalyzes the isomerization between 2-isopropylmalate and 3-isopropylmalate, via the formation of 2-isopropylmaleate. This is 3-isopropylmalate dehydratase small subunit from Novosphingobium aromaticivorans (strain ATCC 700278 / DSM 12444 / CCUG 56034 / CIP 105152 / NBRC 16084 / F199).